The primary structure comprises 282 residues: Elongation factor Ts (282 aa).

The tract at residues 80–83 (TDFV) is involved in Mg(2+) ion dislocation from EF-Tu.

It belongs to the EF-Ts family.

Its subcellular location is the cytoplasm. Its function is as follows. Associates with the EF-Tu.GDP complex and induces the exchange of GDP to GTP. It remains bound to the aminoacyl-tRNA.EF-Tu.GTP complex up to the GTP hydrolysis stage on the ribosome. The sequence is that of Elongation factor Ts from Chlamydia felis (strain Fe/C-56) (Chlamydophila felis).